Consider the following 395-residue polypeptide: Chorismate synthase (395 aa).

The protein belongs to the chorismate synthase family. Homotetramer. It depends on FMNH2 as a cofactor.

It carries out the reaction 5-O-(1-carboxyvinyl)-3-phosphoshikimate = chorismate + phosphate. It functions in the pathway metabolic intermediate biosynthesis; chorismate biosynthesis; chorismate from D-erythrose 4-phosphate and phosphoenolpyruvate: step 7/7. This chain is Chorismate synthase, found in Schizosaccharomyces pombe (strain 972 / ATCC 24843) (Fission yeast).